Consider the following 334-residue polypeptide: Ferrochelatase (334 aa).

The Fe cation site is built by histidine 207 and glutamate 288.

Belongs to the ferrochelatase family.

Its subcellular location is the cytoplasm. The catalysed reaction is heme b + 2 H(+) = protoporphyrin IX + Fe(2+). It functions in the pathway porphyrin-containing compound metabolism; protoheme biosynthesis; protoheme from protoporphyrin-IX: step 1/1. Its function is as follows. Catalyzes the ferrous insertion into protoporphyrin IX. The sequence is that of Ferrochelatase from Helicobacter pylori (strain P12).